A 188-amino-acid chain; its full sequence is Mitochondrial import receptor subunit TOM20 homolog (188 aa).

At methionine 1 to asparagine 12 the chain is on the mitochondrial intermembrane side. Residues valine 13–phenylalanine 31 traverse the membrane as a helical segment. Residues aspartate 32–glutamate 188 lie on the Cytoplasmic side of the membrane. Disordered stretches follow at residues lysine 48 to glycine 67 and alanine 155 to glutamate 188. The segment covering methionine 58 to glycine 67 has biased composition (low complexity).

Belongs to the Tom20 family. As to quaternary structure, forms part of the preprotein translocase complex of the outer mitochondrial membrane (TOM complex).

It is found in the mitochondrion outer membrane. In terms of biological role, central component of the receptor complex responsible for the recognition and translocation of cytosolically synthesized mitochondrial preproteins. Together with TOM22 functions as the transit peptide receptor at the surface of the mitochondrion outer membrane and facilitates the movement of preproteins into the translocation pore. The polypeptide is Mitochondrial import receptor subunit TOM20 homolog (tomm-20) (Caenorhabditis briggsae).